Reading from the N-terminus, the 390-residue chain is Transforming growth factor beta-1 proprotein (390 aa).

A signal peptide spans 1–29 (MPPSRLRLLPLLLPLLWLLVLAPGRPASG). A straightjacket domain region spans residues 30–74 (LSTCKTIDMELVKRKRIEAIRGQILSKLRLASPPSQGDVPPGPLP). The segment at 75–271 (EAVLALYNST…ATPLERAQHL (197 aa)) is arm domain. Asn-82, Asn-136, and Asn-176 each carry an N-linked (GlcNAc...) asparagine glycan. A bowtie tail region spans residues 226–252 (DSKDNTLRVEINGIGPKRRGDLAAIHG). A Cell attachment site motif is present at residues 244–246 (RGD). Disulfide bonds link Cys-285-Cys-294, Cys-293-Cys-356, Cys-322-Cys-387, and Cys-326-Cys-389.

Belongs to the TGF-beta family. In terms of assembly, homodimer; disulfide-linked. Interacts with the serine proteases, HTRA1 and HTRA3: the interaction with either inhibits TGFB1-mediated signaling and the HTRA protease activity is required for this inhibition. May interact with THSD4; this interaction may lead to sequestration by FBN1 microfibril assembly and attenuation of TGFB signaling. Interacts with CD109, DPT and ASPN. Interacts with EFEMP2. Interacts with TSKU; the interaction contributes to regulation of the hair cycle. Interacts with TGFBR3. As to quaternary structure, homodimer; disulfide-linked. Interacts with transforming growth factor beta-1 (TGF-beta-1) chain; interaction is non-covalent and maintains TGF-beta-1 in a latent state; each latency-associated peptide (LAP) monomer interacts with TGF-beta-1 in the other monomer. Interacts with LTBP1; leading to regulation of TGF-beta-1 activation. Interacts with LRRC32/GARP; leading to regulation of TGF-beta-1 activation on the surface of activated regulatory T-cells (Tregs). Interacts with LRRC33/NRROS; leading to regulation of TGF-beta-1 in macrophages and microglia. Interacts (via cell attachment site) with integrins ITGAV and ITGB6 (ITGAV:ITGB6), leading to release of the active TGF-beta-1. Interacts with NREP; the interaction results in a decrease in TGFB1 autoinduction. Interacts with HSP90AB1; inhibits latent TGFB1 activation. Homodimer; disulfide-linked. Interacts with TGF-beta receptors (TGFBR1 and TGFBR2), leading to signal transduction. Transforming growth factor beta-1 proprotein: The precursor proprotein is cleaved in the Golgi apparatus by FURIN to form Transforming growth factor beta-1 (TGF-beta-1) and Latency-associated peptide (LAP) chains, which remain non-covalently linked, rendering TGF-beta-1 inactive. In terms of processing, N-glycosylated. Deglycosylation leads to activation of Transforming growth factor beta-1 (TGF-beta-1); mechanisms triggering deglycosylation-driven activation of TGF-beta-1 are however unclear.

It localises to the secreted. The protein localises to the extracellular space. It is found in the extracellular matrix. Transforming growth factor beta-1 proprotein: Precursor of the Latency-associated peptide (LAP) and Transforming growth factor beta-1 (TGF-beta-1) chains, which constitute the regulatory and active subunit of TGF-beta-1, respectively. In terms of biological role, required to maintain the Transforming growth factor beta-1 (TGF-beta-1) chain in a latent state during storage in extracellular matrix. Associates non-covalently with TGF-beta-1 and regulates its activation via interaction with 'milieu molecules', such as LTBP1, LRRC32/GARP and LRRC33/NRROS, that control activation of TGF-beta-1. Interaction with LRRC33/NRROS regulates activation of TGF-beta-1 in macrophages and microglia. Interaction with LRRC32/GARP controls activation of TGF-beta-1 on the surface of activated regulatory T-cells (Tregs). Interaction with integrins (ITGAV:ITGB6 or ITGAV:ITGB8) results in distortion of the Latency-associated peptide chain and subsequent release of the active TGF-beta-1. Its function is as follows. Multifunctional protein that regulates the growth and differentiation of various cell types and is involved in various processes, such as normal development, immune function, microglia function and responses to neurodegeneration. Activation into mature form follows different steps: following cleavage of the proprotein in the Golgi apparatus, Latency-associated peptide (LAP) and Transforming growth factor beta-1 (TGF-beta-1) chains remain non-covalently linked rendering TGF-beta-1 inactive during storage in extracellular matrix. At the same time, LAP chain interacts with 'milieu molecules', such as LTBP1, LRRC32/GARP and LRRC33/NRROS that control activation of TGF-beta-1 and maintain it in a latent state during storage in extracellular milieus. TGF-beta-1 is released from LAP by integrins (ITGAV:ITGB6 or ITGAV:ITGB8): integrin-binding to LAP stabilizes an alternative conformation of the LAP bowtie tail and results in distortion of the LAP chain and subsequent release of the active TGF-beta-1. Once activated following release of LAP, TGF-beta-1 acts by binding to TGF-beta receptors (TGFBR1 and TGFBR2), which transduce signal. While expressed by many cells types, TGF-beta-1 only has a very localized range of action within cell environment thanks to fine regulation of its activation by Latency-associated peptide chain (LAP) and 'milieu molecules'. Plays an important role in bone remodeling: acts as a potent stimulator of osteoblastic bone formation, causing chemotaxis, proliferation and differentiation in committed osteoblasts. Can promote either T-helper 17 cells (Th17) or regulatory T-cells (Treg) lineage differentiation in a concentration-dependent manner. At high concentrations, leads to FOXP3-mediated suppression of RORC and down-regulation of IL-17 expression, favoring Treg cell development. At low concentrations in concert with IL-6 and IL-21, leads to expression of the IL-17 and IL-23 receptors, favoring differentiation to Th17 cells. Stimulates sustained production of collagen through the activation of CREB3L1 by regulated intramembrane proteolysis (RIP). Mediates SMAD2/3 activation by inducing its phosphorylation and subsequent translocation to the nucleus. Positively regulates odontoblastic differentiation in dental papilla cells, via promotion of IPO7-mediated translocation of phosphorylated SMAD2 to the nucleus and subsequent transcription of target genes. Can induce epithelial-to-mesenchymal transition (EMT) and cell migration in various cell types. The chain is Transforming growth factor beta-1 proprotein (TGFB1) from Cavia porcellus (Guinea pig).